The chain runs to 60 residues: Large ribosomal subunit protein bL32 (60 aa).

Belongs to the bacterial ribosomal protein bL32 family.

In Borrelia turicatae (strain 91E135), this protein is Large ribosomal subunit protein bL32.